Here is a 251-residue protein sequence, read N- to C-terminus: Large ribosomal subunit protein uL16m (251 aa).

A mitochondrion-targeting transit peptide spans Met-1–Gly-29.

The protein belongs to the universal ribosomal protein uL16 family. In terms of assembly, component of the mitochondrial ribosome large subunit (39S) which comprises a 16S rRNA and about 50 distinct proteins.

The protein localises to the mitochondrion. This is Large ribosomal subunit protein uL16m (Mrpl16) from Mus musculus (Mouse).